A 166-amino-acid chain; its full sequence is Ribonuclease H2 subunit C (166 aa).

M1 is subject to N-acetylmethionine.

Belongs to the RNase H2 subunit C family. In terms of assembly, the RNase H2 complex is a heterotrimer composed of the catalytic subunit RNASEH2A and the non-catalytic subunits RNASEH2B and RNASEH2C.

The protein localises to the nucleus. Its function is as follows. Non catalytic subunit of RNase H2, an endonuclease that specifically degrades the RNA of RNA:DNA hybrids. Participates in DNA replication, possibly by mediating the removal of lagging-strand Okazaki fragment RNA primers during DNA replication. Mediates the excision of single ribonucleotides from DNA:RNA duplexes. The chain is Ribonuclease H2 subunit C (Rnaseh2c) from Mus musculus (Mouse).